We begin with the raw amino-acid sequence, 263 residues long: 4-hydroxy-2-oxo-heptane-1,7-dioate aldolase (263 aa).

The Proton acceptor role is filled by H45. Q147 lines the substrate pocket. E149 is an a divalent metal cation binding site. Positions 174 and 175 each coordinate substrate. D175 is an a divalent metal cation binding site.

Belongs to the HpcH/HpaI aldolase family. In terms of assembly, homohexamer; trimer of dimers. The cofactor is a divalent metal cation.

It catalyses the reaction 4-hydroxy-2-oxoheptanedioate = succinate semialdehyde + pyruvate. The protein operates within aromatic compound metabolism; 4-hydroxyphenylacetate degradation; pyruvate and succinate semialdehyde from 4-hydroxyphenylacetate: step 7/7. Its function is as follows. Catalyzes the reversible retro-aldol cleavage of 4-hydroxy-2-ketoheptane-1,7-dioate (HKHD) to pyruvate and succinic semialdehyde. This Salmonella dublin (strain CT_02021853) protein is 4-hydroxy-2-oxo-heptane-1,7-dioate aldolase.